The sequence spans 468 residues: Argininosuccinate lyase (468 aa).

It belongs to the lyase 1 family. Argininosuccinate lyase subfamily.

The protein localises to the cytoplasm. It carries out the reaction 2-(N(omega)-L-arginino)succinate = fumarate + L-arginine. The protein operates within amino-acid biosynthesis; L-arginine biosynthesis; L-arginine from L-ornithine and carbamoyl phosphate: step 3/3. The sequence is that of Argininosuccinate lyase from Alkalilimnicola ehrlichii (strain ATCC BAA-1101 / DSM 17681 / MLHE-1).